A 122-amino-acid polypeptide reads, in one-letter code: MIQTQSMLDVADNSGARRVMCIKVLGGSHRRYAGIGDIIKVTVKEAIPRGKVKKGQVMTAVVVRTRHGVRRADGSIIRFDGNAAVLLNTKQEPIGTRIFGPVTRELRTEKFMKIVSLAPEVL.

This sequence belongs to the universal ribosomal protein uL14 family. Part of the 50S ribosomal subunit. Forms a cluster with proteins L3 and L19. In the 70S ribosome, L14 and L19 interact and together make contacts with the 16S rRNA in bridges B5 and B8.

Its function is as follows. Binds to 23S rRNA. Forms part of two intersubunit bridges in the 70S ribosome. The chain is Large ribosomal subunit protein uL14 from Pseudomonas entomophila (strain L48).